A 447-amino-acid polypeptide reads, in one-letter code: Eukaryotic translation initiation factor 3 subunit E (447 aa).

One can recognise a PCI domain in the interval 253 to 421 (LELFFNAGYI…GTVVMNHPPS (169 aa)).

Belongs to the eIF-3 subunit E family. As to quaternary structure, component of the eukaryotic translation initiation factor 3 (eIF-3) complex.

It is found in the cytoplasm. In terms of biological role, component of the eukaryotic translation initiation factor 3 (eIF-3) complex, which is involved in protein synthesis of a specialized repertoire of mRNAs and, together with other initiation factors, stimulates binding of mRNA and methionyl-tRNAi to the 40S ribosome. The eIF-3 complex specifically targets and initiates translation of a subset of mRNAs involved in cell proliferation. The polypeptide is Eukaryotic translation initiation factor 3 subunit E (Chaetomium globosum (strain ATCC 6205 / CBS 148.51 / DSM 1962 / NBRC 6347 / NRRL 1970) (Soil fungus)).